The sequence spans 314 residues: tRNA N6-adenosine threonylcarbamoyltransferase (314 aa).

The Fe cation site is built by His-106, His-110, and Tyr-127. Substrate contacts are provided by residues Tyr-127 to Ala-131, Asp-159, Gly-172, Glu-176, and Asn-255. Residue Asp-283 coordinates Fe cation.

This sequence belongs to the KAE1 / TsaD family. Requires Fe(2+) as cofactor.

The protein resides in the cytoplasm. The enzyme catalyses L-threonylcarbamoyladenylate + adenosine(37) in tRNA = N(6)-L-threonylcarbamoyladenosine(37) in tRNA + AMP + H(+). Its function is as follows. Required for the formation of a threonylcarbamoyl group on adenosine at position 37 (t(6)A37) in tRNAs that read codons beginning with adenine. Is probably involved in the transfer of the threonylcarbamoyl moiety of threonylcarbamoyl-AMP (TC-AMP) to the N6 group of A37. This chain is tRNA N6-adenosine threonylcarbamoyltransferase, found in Nanoarchaeum equitans (strain Kin4-M).